Consider the following 302-residue polypeptide: tRNA pseudouridine synthase B (302 aa).

Catalysis depends on Asp-45, which acts as the Nucleophile.

Belongs to the pseudouridine synthase TruB family. Type 1 subfamily.

It catalyses the reaction uridine(55) in tRNA = pseudouridine(55) in tRNA. Its function is as follows. Responsible for synthesis of pseudouridine from uracil-55 in the psi GC loop of transfer RNAs. This is tRNA pseudouridine synthase B from Francisella tularensis subsp. novicida (strain U112).